The chain runs to 470 residues: V-type ATP synthase beta chain (470 aa).

It belongs to the ATPase alpha/beta chains family.

Functionally, produces ATP from ADP in the presence of a proton gradient across the membrane. The V-type beta chain is a regulatory subunit. This Deinococcus geothermalis (strain DSM 11300 / CIP 105573 / AG-3a) protein is V-type ATP synthase beta chain.